Consider the following 765-residue polypeptide: Probable dipeptidyl peptidase 4 (765 aa).

An N-terminal signal peptide occupies residues 1-14; it reads MKWSILLLVGCAAA. N-linked (GlcNAc...) asparagine glycans are attached at residues asparagine 35, asparagine 78, asparagine 101, asparagine 110, asparagine 169, asparagine 218, asparagine 465, and asparagine 490. The active-site Charge relay system is serine 613. Asparagine 665 is a glycosylation site (N-linked (GlcNAc...) asparagine). Residues aspartate 690 and histidine 725 each act as charge relay system in the active site.

The protein belongs to the peptidase S9B family.

The protein resides in the secreted. The enzyme catalyses Release of an N-terminal dipeptide, Xaa-Yaa-|-Zaa-, from a polypeptide, preferentially when Yaa is Pro, provided Zaa is neither Pro nor hydroxyproline.. Functionally, extracellular dipeptidyl-peptidase which removes N-terminal dipeptides sequentially from polypeptides having unsubstituted N-termini provided that the penultimate residue is proline. The sequence is that of Probable dipeptidyl peptidase 4 (dpp4) from Neosartorya fischeri (strain ATCC 1020 / DSM 3700 / CBS 544.65 / FGSC A1164 / JCM 1740 / NRRL 181 / WB 181) (Aspergillus fischerianus).